Here is a 340-residue protein sequence, read N- to C-terminus: MKSFLSSCTTGGCGAKIGPGELSKVLSGLPVFQDPQLLVGFDASDDAAVYQINEDTAIVSTVDFFTPMVEDPRTFGRIAAANALSDVYAMGGSPLFALNLVCYPEREDIQDLGEILAGGAEKLQEAGAVLCGGHSIYDREPKYGLAVTGRLNPRQIWKNNTPQPGDRLILTKPLGVGIVMAALRGEMAEAAAVEAALASMQRLNKYAAEKARDFPIHACTDITGFGLLAHTREMAGGSTTIVLYPSALPYIAQAYTYAQGYLLTAAGQRNRNFMEGAVEFGDTPFPLQELMLDPQTSGGLLLSVPGDCAQEALRAIQETEPQAALIGEVLPRQDFPILLG.

The active site involves Cys-13. Residues Lys-16 and 43–45 (ASD) contribute to the ATP site. Residue Asp-46 participates in Mg(2+) binding. ATP contacts are provided by residues Asp-63, Asp-86, and 133 to 135 (GHS). Asp-86 contacts Mg(2+). Residue Asp-221 coordinates Mg(2+).

This sequence belongs to the selenophosphate synthase 1 family. Class I subfamily. In terms of assembly, homodimer. It depends on Mg(2+) as a cofactor.

It carries out the reaction hydrogenselenide + ATP + H2O = selenophosphate + AMP + phosphate + 2 H(+). Functionally, synthesizes selenophosphate from selenide and ATP. This chain is Selenide, water dikinase, found in Desulfitobacterium hafniense (strain DSM 10664 / DCB-2).